The primary structure comprises 1690 residues: Trinucleotide repeat-containing gene 6C protein (1690 aa).

3 stretches are compositionally biased toward polar residues: residues 1–12 (MATGSAQSSFPS), 19–36 (GSHGTNGALVQSPSNQSA), and 160–183 (AEPQTSTSQNVSFSVQPQNLNTDG). Disordered stretches follow at residues 1–42 (MATG…AGGT), 158–202 (ESAE…AMQT), 226–848 (PGAN…EPVV), and 863–928 (CKPA…TPGK). The interval 1-921 (MATGSAQSSF…GNTSKKGLQK (921 aa)) is sufficient for interaction with argonaute family proteins. Low complexity predominate over residues 184-198 (PNNTNPMNSSPNPIN). The segment covering 255-288 (NPATGSTNCGFSQGNGDTVNSALSAKQNGSSSAV) has biased composition (polar residues). Residue R313 is modified to Omega-N-methylarginine. A compositionally biased stretch (polar residues) spans 362–374 (GWDSASAASQTPA). Low complexity predominate over residues 384–404 (SWAKATSSGTTASEGSSDGSG). The span at 415-426 (GTGEGRRRDKGV) shows a compositional bias: basic and acidic residues. A compositionally biased stretch (polar residues) spans 444–459 (LSNSGWGQTPVKQNTA). Basic and acidic residues predominate over residues 464–474 (ESPRSERKNDN). Residue S465 is modified to Phosphoserine. Composition is skewed to polar residues over residues 482–510 (IATQPSNSGGKTDGSIMNSTNTSSVSGWV), 519–530 (ANTSWGDSNNKA), 540–551 (SISSTAVNNAAA), 644–656 (GTNAKVNPGTNWG), and 663–678 (PQQNWAHKPQDNNVSN). A Phosphoserine modification is found at S714. Positions 754–771 (SSTTAPATPTTPTSSSTT) are enriched in low complexity. Phosphothreonine is present on T776. Residues 778–788 (PSHQAGTQLNR) show a composition bias toward polar residues. Residues 901–915 (SQESSSSCSSWGNTS) show a composition bias toward low complexity. In terms of domain architecture, UBA spans 928-973 (KQDEAWIMSRLIKQLTDMGFPREPAEEALKSNSMNLDQAMSALLEK). Position 1006 is a phosphoserine (S1006). Positions 1156–1214 (QLQLAYQRLQIQQQMLQAQRNVSGPMRQQEQQVARTITNLQQQIQQHQRQLAQALLVKQ) form a coiled coil. Disordered regions lie at residues 1212–1337 (VKQP…PPGK), 1351–1380 (QNSESPASPPVAVPHSWSRAKSDSDKISNG), 1397–1421 (GLQNIDPENDPDVTPGSVPTGPTIN), 1441–1486 (IKST…PSST), and 1600–1625 (PPTSSWQSSSGGSQPRLGTSGSTHGL). Residues 1214–1223 (QPPPPPPPPH) are compositionally biased toward pro residues. Residues 1260-1690 (NTFAPYPLAG…PGDLLSGESI (431 aa)) are silencing domain; interaction with CNOT1 and PAN3. Residues 1272–1321 (PNMNVNSIDMSSGLSVKDPSQSQSRLPQWTHPNSMGNLSSAASPLDQNPS) show a composition bias toward polar residues. The tract at residues 1371 to 1417 (KSDSDKISNGSSISWPPEFHPGVPWKGLQNIDPENDPDVTPGSVPTG) is required for interaction with PABPC1. Residues 1371-1690 (KSDSDKISNG…PGDLLSGESI (320 aa)) form a sufficient for translational repression when tethered to a target mRNA region. Residues 1381-1399 (SSISWPPEFHPGVPWKGLQ) form a PABPC1-interacting motif-2 (PAM2) region. Polar residues predominate over residues 1441-1457 (IKSTWSSGPASHTQASL). In terms of domain architecture, RRM spans 1565 to 1632 (AQKSLHMCVL…HGLVRSDTAH (68 aa)). The interaction with the CCR4-NOT complex stretch occupies residues 1596-1690 (GQALPPTSSW…PGDLLSGESI (95 aa)). A compositionally biased stretch (low complexity) spans 1603-1613 (SSWQSSSGGSQ).

Belongs to the GW182 family. As to quaternary structure, interacts with one or more of the argonaute family proteins AGO1, AGO2, AGO3 and AGO4. Interacts with CNOT1; the interaction mediates the association with the CCR4-NOT complex. Interacts with PAN3; the interaction mediates the association with the PAN complex.

In terms of biological role, plays a role in RNA-mediated gene silencing by micro-RNAs (miRNAs). Required for miRNA-dependent translational repression of complementary mRNAs by argonaute family proteins As scaffoldng protein associates with argonaute proteins bound to partially complementary mRNAs and simultaneously can recruit CCR4-NOT and PAN deadenylase complexes. The polypeptide is Trinucleotide repeat-containing gene 6C protein (Tnrc6c) (Mus musculus (Mouse)).